A 177-amino-acid chain; its full sequence is Large ribosomal subunit protein uL6 (177 aa).

This sequence belongs to the universal ribosomal protein uL6 family. Part of the 50S ribosomal subunit.

Its function is as follows. This protein binds to the 23S rRNA, and is important in its secondary structure. It is located near the subunit interface in the base of the L7/L12 stalk, and near the tRNA binding site of the peptidyltransferase center. The sequence is that of Large ribosomal subunit protein uL6 from Histophilus somni (strain 129Pt) (Haemophilus somnus).